Here is a 219-residue protein sequence, read N- to C-terminus: Ribose-5-phosphate isomerase A (219 aa).

Residues 28-31 (TGST), 81-84 (DGAD), and 94-97 (KGGG) each bind substrate. The active-site Proton acceptor is Glu-103. Substrate is bound at residue Lys-121.

The protein belongs to the ribose 5-phosphate isomerase family. As to quaternary structure, homodimer.

The catalysed reaction is aldehydo-D-ribose 5-phosphate = D-ribulose 5-phosphate. Its pathway is carbohydrate degradation; pentose phosphate pathway; D-ribose 5-phosphate from D-ribulose 5-phosphate (non-oxidative stage): step 1/1. Catalyzes the reversible conversion of ribose-5-phosphate to ribulose 5-phosphate. This is Ribose-5-phosphate isomerase A from Escherichia fergusonii (strain ATCC 35469 / DSM 13698 / CCUG 18766 / IAM 14443 / JCM 21226 / LMG 7866 / NBRC 102419 / NCTC 12128 / CDC 0568-73).